Consider the following 307-residue polypeptide: Probable GTP 3',8-cyclase (307 aa).

The Radical SAM core domain maps to 5–227; that stretch reads AYGRRISSLR…RRTKYYLGGA (223 aa). Arg14 is a binding site for GTP. Residues Cys21 and Cys25 each coordinate [4Fe-4S] cluster. Residue Tyr27 participates in S-adenosyl-L-methionine binding. Cys28 is a [4Fe-4S] cluster binding site. Lys61 is a GTP binding site. Gly65 is an S-adenosyl-L-methionine binding site. Thr89 is a GTP binding site. Ser113 contacts S-adenosyl-L-methionine. Lys151 is a binding site for GTP. Residues Cys241 and Cys244 each coordinate [4Fe-4S] cluster. Position 246–248 (246–248) interacts with GTP; it reads RLR. Cys258 is a binding site for [4Fe-4S] cluster.

Belongs to the radical SAM superfamily. MoaA family. Requires [4Fe-4S] cluster as cofactor.

It carries out the reaction GTP + AH2 + S-adenosyl-L-methionine = (8S)-3',8-cyclo-7,8-dihydroguanosine 5'-triphosphate + 5'-deoxyadenosine + L-methionine + A + H(+). It participates in cofactor biosynthesis; molybdopterin biosynthesis. Functionally, catalyzes the cyclization of GTP to (8S)-3',8-cyclo-7,8-dihydroguanosine 5'-triphosphate. The protein is Probable GTP 3',8-cyclase of Methanocella arvoryzae (strain DSM 22066 / NBRC 105507 / MRE50).